A 270-amino-acid chain; its full sequence is 4-diphosphocytidyl-2-C-methyl-D-erythritol kinase (270 aa).

Lys-8 is an active-site residue. 90 to 100 lines the ATP pocket; it reads PIGAGLGGGSS. Asp-132 is an active-site residue.

It belongs to the GHMP kinase family. IspE subfamily.

It catalyses the reaction 4-CDP-2-C-methyl-D-erythritol + ATP = 4-CDP-2-C-methyl-D-erythritol 2-phosphate + ADP + H(+). It functions in the pathway isoprenoid biosynthesis; isopentenyl diphosphate biosynthesis via DXP pathway; isopentenyl diphosphate from 1-deoxy-D-xylulose 5-phosphate: step 3/6. Functionally, catalyzes the phosphorylation of the position 2 hydroxy group of 4-diphosphocytidyl-2C-methyl-D-erythritol. The chain is 4-diphosphocytidyl-2-C-methyl-D-erythritol kinase from Cytophaga hutchinsonii (strain ATCC 33406 / DSM 1761 / CIP 103989 / NBRC 15051 / NCIMB 9469 / D465).